The following is a 214-amino-acid chain: Cytochrome b (214 aa).

4 consecutive transmembrane segments (helical) span residues 31 to 51, 75 to 96, 111 to 131, and 176 to 196; these read FGSM…FLAI, WIMQ…YTHI, WLSG…GYVL, and FFAL…IHIL. Residues His81 and His95 each contribute to the heme b site. The heme b site is built by His180 and His194. A ubiquinone is bound at residue His199.

The protein belongs to the cytochrome b family. In terms of assembly, the cytochrome bc1 complex contains 3 respiratory subunits (MT-CYB, CYC1 and UQCRFS1), 2 core proteins (UQCRC1 and UQCRC2) and probably 6 low-molecular weight proteins. The cofactor is heme b.

The protein resides in the mitochondrion inner membrane. Functionally, component of the ubiquinol-cytochrome c reductase complex (complex III or cytochrome b-c1 complex) that is part of the mitochondrial respiratory chain. The b-c1 complex mediates electron transfer from ubiquinol to cytochrome c. Contributes to the generation of a proton gradient across the mitochondrial membrane that is then used for ATP synthesis. In Lachesis muta muta (Bushmaster), this protein is Cytochrome b (MT-CYB).